The primary structure comprises 149 residues: Transthyretin (149 aa).

The signal sequence occupies residues 1–22; that stretch reads MAFHSLLLLCLAGLAFVSETAA. The residue at position 32 (Cys32) is a Sulfocysteine. Lys37 contacts L-thyroxine. At Glu64 the chain carries 4-carboxyglutamate. Residues Glu76 and Ser139 each contribute to the L-thyroxine site.

The protein belongs to the transthyretin family. As to quaternary structure, homotetramer. Dimer of dimers. In the homotetramer, subunits assemble around a central channel that can accommodate two ligand molecules. Interacts with RBP4. Post-translationally, sulfonation of the reactive cysteine Cys-32 enhances the stability of the native conformation of TTR, avoiding misassembly of the protein leading to amyloid formation. Detected in liver.

It is found in the secreted. Functionally, thyroid hormone-binding protein. Probably transports thyroxine from the bloodstream to the brain. This chain is Transthyretin (TTR), found in Macropus giganteus (Eastern gray kangaroo).